We begin with the raw amino-acid sequence, 415 residues long: Serine hydroxymethyltransferase (415 aa).

(6S)-5,6,7,8-tetrahydrofolate is bound by residues Leu-121 and 125–127 (GHL). Residue Lys-230 is modified to N6-(pyridoxal phosphate)lysine. (6S)-5,6,7,8-tetrahydrofolate is bound at residue 355 to 357 (SPF).

This sequence belongs to the SHMT family. In terms of assembly, homodimer. Pyridoxal 5'-phosphate serves as cofactor.

It localises to the cytoplasm. The enzyme catalyses (6R)-5,10-methylene-5,6,7,8-tetrahydrofolate + glycine + H2O = (6S)-5,6,7,8-tetrahydrofolate + L-serine. It functions in the pathway one-carbon metabolism; tetrahydrofolate interconversion. The protein operates within amino-acid biosynthesis; glycine biosynthesis; glycine from L-serine: step 1/1. In terms of biological role, catalyzes the reversible interconversion of serine and glycine with tetrahydrofolate (THF) serving as the one-carbon carrier. This reaction serves as the major source of one-carbon groups required for the biosynthesis of purines, thymidylate, methionine, and other important biomolecules. Also exhibits THF-independent aldolase activity toward beta-hydroxyamino acids, producing glycine and aldehydes, via a retro-aldol mechanism. This is Serine hydroxymethyltransferase from Lactococcus lactis subsp. cremoris (strain MG1363).